Consider the following 320-residue polypeptide: Ferrochelatase (320 aa).

His194 and Glu275 together coordinate Fe cation.

Belongs to the ferrochelatase family. Monomer.

The protein localises to the cytoplasm. It carries out the reaction heme b + 2 H(+) = protoporphyrin IX + Fe(2+). It participates in porphyrin-containing compound metabolism; protoheme biosynthesis; protoheme from protoporphyrin-IX: step 1/1. In terms of biological role, catalyzes the ferrous insertion into protoporphyrin IX. The chain is Ferrochelatase from Escherichia coli O157:H7 (strain EC4115 / EHEC).